The primary structure comprises 374 residues: Carbamoyl phosphate synthase small chain (374 aa).

A CPSase region spans residues 1 to 186 (MTEPAILVLE…DRNEWKRAAP (186 aa)). L-glutamine is bound by residues serine 47, glycine 237, and glycine 239. The Glutamine amidotransferase type-1 domain maps to 189-374 (KVVAYDYGVK…RFITMMAAQS (186 aa)). The active-site Nucleophile is the cysteine 265. L-glutamine contacts are provided by leucine 266, glutamine 269, asparagine 307, glycine 309, and phenylalanine 310. Active-site residues include histidine 349 and glutamate 351.

The protein belongs to the CarA family. In terms of assembly, composed of two chains; the small (or glutamine) chain promotes the hydrolysis of glutamine to ammonia, which is used by the large (or ammonia) chain to synthesize carbamoyl phosphate. Tetramer of heterodimers (alpha,beta)4.

The enzyme catalyses hydrogencarbonate + L-glutamine + 2 ATP + H2O = carbamoyl phosphate + L-glutamate + 2 ADP + phosphate + 2 H(+). It catalyses the reaction L-glutamine + H2O = L-glutamate + NH4(+). It functions in the pathway amino-acid biosynthesis; L-arginine biosynthesis; carbamoyl phosphate from bicarbonate: step 1/1. Its pathway is pyrimidine metabolism; UMP biosynthesis via de novo pathway; (S)-dihydroorotate from bicarbonate: step 1/3. Small subunit of the glutamine-dependent carbamoyl phosphate synthetase (CPSase). CPSase catalyzes the formation of carbamoyl phosphate from the ammonia moiety of glutamine, carbonate, and phosphate donated by ATP, constituting the first step of 2 biosynthetic pathways, one leading to arginine and/or urea and the other to pyrimidine nucleotides. The small subunit (glutamine amidotransferase) binds and cleaves glutamine to supply the large subunit with the substrate ammonia. This is Carbamoyl phosphate synthase small chain from Xylella fastidiosa (strain 9a5c).